The sequence spans 293 residues: Tumor necrosis factor receptor type 1-associated DEATH domain protein (293 aa).

The Nuclear export signal motif lies at 156 to 171 (LRDDEVTQLEQQLQNS). Residues 200-290 (TPADQQRFAA…SMAEIMLGIQ (91 aa)) form the Death domain. The Nuclear localization signal signature appears at 216 to 229 (KRVGRALQKNCRAL).

As to quaternary structure, heterodimer with tnfrsf1a.

It localises to the nucleus. Its subcellular location is the cytoplasm. The protein resides in the cytoskeleton. Adapter molecule for tnfrsf1a that specifically associates with the cytoplasmic domain of activated tnfrsf1a mediating its interaction with fadd. The chain is Tumor necrosis factor receptor type 1-associated DEATH domain protein from Danio rerio (Zebrafish).